A 1438-amino-acid chain; its full sequence is Membrane-anchored lipid-binding protein YSP2 (1438 aa).

Residues M1–F17 show a composition bias toward basic and acidic residues. Disordered stretches follow at residues M1–P97, K174–P194, Q200–N219, Q285–N308, T338–F418, D455–K485, and S505–S543. Residues M1–N1277 lie on the Cytoplasmic side of the membrane. S13 carries the phosphoserine modification. Positions F18–Q29 are enriched in basic residues. Residues P30–S44 are compositionally biased toward basic and acidic residues. Over residues T45–A58 the composition is skewed to low complexity. Over residues I74–P97 the composition is skewed to polar residues. Low complexity-rich tracts occupy residues Q286 to P298 and P374 to N398. The residue at position 411 (S411) is a Phosphoserine. The span at D455–L470 shows a compositional bias: low complexity. The span at S471 to K485 shows a compositional bias: polar residues. Residue S596 is modified to Phosphoserine. The GRAM domain occupies E648–T716. The segment at S777–T843 is disordered. The span at D783–D800 shows a compositional bias: acidic residues. Residues N818–Y832 show a composition bias toward polar residues. Residues N851–D1018 enclose the VASt 1 domain. Residue S1032 is modified to Phosphoserine. One can recognise a VASt 2 domain in the interval D1059–S1225. The tract at residues S1225 to F1257 is disordered. Residues T1227–S1243 are compositionally biased toward basic residues. A helical membrane pass occupies residues I1278–F1298. Residues R1299 to L1438 lie on the Lumenal side of the membrane. N-linked (GlcNAc...) asparagine glycans are attached at residues N1306, N1373, and N1430.

The protein belongs to the YSP2 family.

It is found in the mitochondrion membrane. The protein resides in the endoplasmic reticulum membrane. In terms of biological role, involved in induction of programmed cell death in response to reactive oxygen species (ROS). May be involved in sterol transfer between intracellular membranes. The sequence is that of Membrane-anchored lipid-binding protein YSP2 from Saccharomyces cerevisiae (strain ATCC 204508 / S288c) (Baker's yeast).